The following is a 186-amino-acid chain: Casparian strip membrane protein 3 (186 aa).

The Cytoplasmic portion of the chain corresponds to 1–26; sequence MTKSTYVELGEEKTSNQKGNMKRGVS. The helical transmembrane segment at 27 to 47 threads the bilayer; it reads ILDFILRLIAIVATLASAIAM. Over 48-74 the chain is Extracellular; it reads GTTDESLPFFTQFVRFRANYDDLPTLR. Residues 75 to 95 form a helical membrane-spanning segment; sequence FFVVASAIVSGYLILSLPLSI. Topologically, residues 96–107 are cytoplasmic; sequence LHIIRSSAGMTR. The helical transmembrane segment at 108–128 threads the bilayer; that stretch reads VIFIILDTVMLGLLTAGSSAA. Residues 129–161 lie on the Extracellular side of the membrane; sequence ASIVYLAHKGNRKANWFAFCQQYNSFCERISGS. A helical transmembrane segment spans residues 162–182; the sequence is LIGSFIAIPLFIMLILLSALV. Topologically, residues 183-186 are cytoplasmic; sequence LSRR.

This sequence belongs to the Casparian strip membrane proteins (CASP) family. In terms of assembly, homodimer and heterodimers.

It is found in the cell membrane. In terms of biological role, regulates membrane-cell wall junctions and localized cell wall deposition. Required for establishment of the Casparian strip membrane domain (CSD) and the subsequent formation of Casparian strips, a cell wall modification of the root endodermis that determines an apoplastic barrier between the intraorganismal apoplasm and the extraorganismal apoplasm and prevents lateral diffusion. In Medicago truncatula (Barrel medic), this protein is Casparian strip membrane protein 3.